Here is a 469-residue protein sequence, read N- to C-terminus: RuvB-like helicase 2 (469 aa).

74-81 (GPPSTGKT) contributes to the ATP binding site.

This sequence belongs to the RuvB family. In terms of assembly, may form heterododecamers with RVB1. Component of the SWR1 chromatin remodeling complex, the INO80 chromatin remodeling complex, and of the R2TP complex.

It localises to the nucleus. It carries out the reaction ATP + H2O = ADP + phosphate + H(+). In terms of biological role, DNA helicase which participates in several chromatin remodeling complexes, including the SWR1 and the INO80 complexes. The SWR1 complex mediates the ATP-dependent exchange of histone H2A for the H2A variant HZT1 leading to transcriptional regulation of selected genes by chromatin remodeling. The INO80 complex remodels chromatin by shifting nucleosomes and is involved in DNA repair. Also involved in pre-rRNA processing. This Eremothecium gossypii (strain ATCC 10895 / CBS 109.51 / FGSC 9923 / NRRL Y-1056) (Yeast) protein is RuvB-like helicase 2 (RVB2).